The primary structure comprises 336 residues: Pentalenene synthase (336 aa).

Residues Asp-80, Asp-84, Asn-219, Ser-223, and Glu-227 each coordinate Mg(2+). Residues 80–84 carry the DDXXD motif motif; it reads DDLFD.

The protein belongs to the terpene synthase family. As to quaternary structure, monomer. Mg(2+) serves as cofactor.

It carries out the reaction (2E,6E)-farnesyl diphosphate = pentalenene + diphosphate. It functions in the pathway antibiotic biosynthesis; neopentalenolactone biosynthesis. Its function is as follows. Catalyzes the cyclization of farnesyl diphosphate (FPP) to the tricyclic sesquiterpene pentalenene in the biosynthesis of neopentalenolactone antibiotic. This chain is Pentalenene synthase (ptlA), found in Streptomyces avermitilis (strain ATCC 31267 / DSM 46492 / JCM 5070 / NBRC 14893 / NCIMB 12804 / NRRL 8165 / MA-4680).